Reading from the N-terminus, the 978-residue chain is NACHT, LRR and PYD domains-containing protein 4E (978 aa).

Residues 1–93 enclose the Pyrin domain; the sequence is MASFFSDFGL…MERAGREIAG (93 aa). The NACHT domain occupies 148–471; that stretch reads HMVFLQGVAG…FHLLKSHVDH (324 aa). 154–161 serves as a coordination point for ATP; sequence GVAGIGKS. LRR repeat units lie at residues 594–617, 694–717, 746–773, 802–825, 859–882, and 916–940; these read CSTL…HSYT, LLNL…LNQA, SKML…LCHP, NKTL…VLCG, NQNL…LLCD, and CKTL…LFEA.

The protein belongs to the NLRP family.

Functionally, may be involved in inflammation and recognition of cytosolic pathogen-associated molecular patterns (PAMPs) not intercepted by membrane-bound receptors. In Mus musculus (Mouse), this protein is NACHT, LRR and PYD domains-containing protein 4E (Nlrp4e).